Here is a 710-residue protein sequence, read N- to C-terminus: Prolyl endopeptidase (710 aa).

N-acetylmethionine is present on M1. K157 is modified (N6-acetyllysine). Active-site charge relay system residues include S554, D641, and H680.

The protein belongs to the peptidase S9A family. In terms of tissue distribution, expressed in all tissues tested: uterus, kidney, heart, lung, small intestine, smooth muscle, liver, spleen, thymus, adrenal, pituitary and whole brain.

The protein localises to the cytoplasm. The catalysed reaction is Hydrolysis of Pro-|-Xaa &gt;&gt; Ala-|-Xaa in oligopeptides.. Inhibited by DFP, Z-Pro-prolinal and poststatin, but not by PMSF, SBTI, EDTA, leupeptin, E-64 and pepstatin. Its function is as follows. Cleaves peptide bonds on the C-terminal side of prolyl residues within peptides that are up to approximately 30 amino acids long. Has high activity on the succinyl- (suc-) peptide-4-methylcoumaryl-7-amide (MCA) substrates suc-Gly-Pro-Leu-Gly-Pro-MCA, suc-Gly-Pro-MCA and suc-Ala-Ala-Ala-MCA. The sequence is that of Prolyl endopeptidase from Rattus norvegicus (Rat).